Consider the following 299-residue polypeptide: Putative pyrroline-5-carboxylate reductase 4 (299 aa).

It belongs to the pyrroline-5-carboxylate reductase family.

The catalysed reaction is L-proline + NADP(+) = (S)-1-pyrroline-5-carboxylate + NADPH + 2 H(+). It catalyses the reaction L-proline + NAD(+) = (S)-1-pyrroline-5-carboxylate + NADH + 2 H(+). It functions in the pathway amino-acid biosynthesis; L-proline biosynthesis; L-proline from L-glutamate 5-semialdehyde: step 1/1. The polypeptide is Putative pyrroline-5-carboxylate reductase 4 (Caenorhabditis elegans).